The primary structure comprises 370 residues: Phosphoserine aminotransferase (370 aa).

The residue at position 1 (M1) is an N-acetylmethionine. O-phospho-L-serine-binding residues include H44 and R45. K51 carries the N6-acetyllysine modification. 3 residues coordinate pyridoxal 5'-phosphate: G79, C80, and W107. K127 carries the post-translational modification N6-acetyllysine. Pyridoxal 5'-phosphate is bound by residues T156, D176, and Q199. At K200 the chain carries N6-(pyridoxal phosphate)lysine. N241 and T242 together coordinate pyridoxal 5'-phosphate. N6-acetyllysine is present on residues K269, K318, and K323. S331 bears the Phosphoserine mark. K333 carries the N6-acetyllysine modification. Positions 335, 336, and 342 each coordinate O-phospho-L-serine.

The protein belongs to the class-V pyridoxal-phosphate-dependent aminotransferase family. SerC subfamily. In terms of assembly, homodimer. Pyridoxal 5'-phosphate serves as cofactor.

It catalyses the reaction O-phospho-L-serine + 2-oxoglutarate = 3-phosphooxypyruvate + L-glutamate. Its pathway is amino-acid biosynthesis; L-serine biosynthesis; L-serine from 3-phospho-D-glycerate: step 2/3. In terms of biological role, involved in L-serine biosynthesis via the phosphorylated pathway, a three-step pathway converting the glycolytic intermediate 3-phospho-D-glycerate into L-serine. Catalyzes the second step, that is the pyridoxal 5'-phosphate-dependent transamination of 3-phosphohydroxypyruvate and L-glutamate to O-phosphoserine (OPS) and alpha-ketoglutarate. The polypeptide is Phosphoserine aminotransferase (PSAT1) (Oryctolagus cuniculus (Rabbit)).